We begin with the raw amino-acid sequence, 312 residues long: Acetyl-coenzyme A carboxylase carboxyl transferase subunit beta (312 aa).

A disordered region spans residues methionine 1–proline 52. Positions proline 18–threonine 32 are enriched in low complexity. Residues valine 55 to lysine 312 form the CoA carboxyltransferase N-terminal domain. Cysteine 59, cysteine 62, cysteine 78, and cysteine 81 together coordinate Zn(2+). A C4-type zinc finger spans residues cysteine 59–cysteine 81.

Belongs to the AccD/PCCB family. Acetyl-CoA carboxylase is a heterohexamer composed of biotin carboxyl carrier protein (AccB), biotin carboxylase (AccC) and two subunits each of ACCase subunit alpha (AccA) and ACCase subunit beta (AccD). Zn(2+) serves as cofactor.

The protein localises to the cytoplasm. It catalyses the reaction N(6)-carboxybiotinyl-L-lysyl-[protein] + acetyl-CoA = N(6)-biotinyl-L-lysyl-[protein] + malonyl-CoA. It functions in the pathway lipid metabolism; malonyl-CoA biosynthesis; malonyl-CoA from acetyl-CoA: step 1/1. Component of the acetyl coenzyme A carboxylase (ACC) complex. Biotin carboxylase (BC) catalyzes the carboxylation of biotin on its carrier protein (BCCP) and then the CO(2) group is transferred by the transcarboxylase to acetyl-CoA to form malonyl-CoA. The polypeptide is Acetyl-coenzyme A carboxylase carboxyl transferase subunit beta (Rhodopirellula baltica (strain DSM 10527 / NCIMB 13988 / SH1)).